The sequence spans 66 residues: Brevinin-1CDYd (66 aa).

The signal sequence occupies residues 1–22; the sequence is MFTLKKSLLILFFLGTINFSLC. Residues 23–44 constitute a propeptide that is removed on maturation; sequence EEERNAEEERRDDPEERDVEVE. Cys-60 and Cys-66 are oxidised to a cystine.

This sequence belongs to the frog skin active peptide (FSAP) family. Brevinin subfamily. In terms of tissue distribution, expressed by the skin glands.

It localises to the secreted. In terms of biological role, antimicrobial peptide. The sequence is that of Brevinin-1CDYd from Rana dybowskii (Dybovsky's frog).